Reading from the N-terminus, the 513-residue chain is Ribonuclease Y (513 aa).

Residues 4–24 (TTSLIIAILAGILGIVIGFFF) form a helical membrane-spanning segment. A disordered region spans residues 78–106 (KSRLKEISRQEDRLNSKEENLERKNASLE). Positions 203–288 (TVSVVNLPND…EMVEKARKDV (86 aa)) constitute a KH domain. The 94-residue stretch at 329-422 (VLKHSIEVSN…VQSADAISAA (94 aa)) folds into the HD domain.

The protein belongs to the RNase Y family.

The protein localises to the cell membrane. In terms of biological role, endoribonuclease that initiates mRNA decay. This Finegoldia magna (strain ATCC 29328 / DSM 20472 / WAL 2508) (Peptostreptococcus magnus) protein is Ribonuclease Y.